A 258-amino-acid polypeptide reads, in one-letter code: Capsid protein (258 aa).

The Bipartite nuclear localization signal signature appears at 3–20; that stretch reads KRPGDIIISTPGSKVRRR. The short motif at 41 to 55 is the Nuclear localization signal element; it reads RKRAWVNRPMYRKPT. The segment at 69 to 86 is a zinc-finger region; that stretch reads CEGPCKVQSFEQRDDVKH. Positions 102–123 match the Nuclear export signal motif; it reads LTHRVGKRFCIKSIYILGKIWL. The short motif at 202 to 249 is the Bipartite nuclear localization signal element; it reads KRFYRLNHHVTYNHQEAGKYENHTENALLLYMACTHASNPVYATLKIR.

The protein belongs to the geminiviridae capsid protein family. Homomultimer. Binds to single-stranded and double-stranded viral DNA. Interacts (via nuclear localization signals) with host importin alpha-1a.

Its subcellular location is the virion. The protein resides in the host nucleus. Its function is as follows. Encapsidates the viral DNA into characteristic twinned ('geminate') particles. Binds the genomic viral ssDNA and shuttles it into and out of the cell nucleus. The CP of bipartite geminiviruses is not required for cell-to-cell or systemic movement. This African cassava mosaic virus (isolate West Kenyan 844) (ACMV) protein is Capsid protein.